The sequence spans 321 residues: Basic peroxidase (321 aa).

An N-terminal signal peptide occupies residues 1–30; the sequence is MSYHKSSGTILMVPLFMLLISVNYFMSCNA. Residue Gln-31 is modified to Pyrrolidone carboxylic acid. 4 disulfide bridges follow: Cys-41–Cys-117, Cys-74–Cys-79, Cys-123–Cys-317, and Cys-202–Cys-228. His-72 acts as the Proton acceptor in catalysis. Positions 73, 76, 78, 80, and 82 each coordinate Ca(2+). A substrate-binding site is contributed by Pro-165. His-195 provides a ligand contact to heme b. Thr-196 serves as a coordination point for Ca(2+). Asn-211 and Asn-221 each carry an N-linked (GlcNAc...) asparagine glycan. The Ca(2+) site is built by Asp-241, Thr-244, and Asp-249.

The protein belongs to the peroxidase family. Classical plant (class III) peroxidase subfamily. Heme b is required as a cofactor. Ca(2+) serves as cofactor. Post-translationally, N-glycosylated. In terms of tissue distribution, expressed in tracheary elements, roots, young and old hypocotyls, and stems in the partially glycosylated form and in roots and young hypocotyls in the fully glycosylated form. None of the isoforms is significantly expressed in leaves or cotyledons.

It localises to the secreted. It carries out the reaction 2 a phenolic donor + H2O2 = 2 a phenolic radical donor + 2 H2O. Its function is as follows. Removal of H(2)O(2), oxidation of toxic reductants, biosynthesis and degradation of lignin, suberization, auxin catabolism, response to environmental stresses such as wounding, pathogen attack and oxidative stress. These functions might be dependent on each isozyme/isoform in each plant tissue. Involved in the synthesis of highly polymerized lignins. This chain is Basic peroxidase (POD1), found in Zinnia elegans (Garden zinnia).